Reading from the N-terminus, the 139-residue chain is Large ribosomal subunit protein uL16 (139 aa).

It belongs to the universal ribosomal protein uL16 family. Part of the 50S ribosomal subunit.

In terms of biological role, binds 23S rRNA and is also seen to make contacts with the A and possibly P site tRNAs. This Mycoplasma pneumoniae (strain ATCC 29342 / M129 / Subtype 1) (Mycoplasmoides pneumoniae) protein is Large ribosomal subunit protein uL16.